A 304-amino-acid chain; its full sequence is MSIVNTDLDGILPLIAKGKVRDIYAVDENNLLFVATDRISAYDVIMTNGIPDKGKILTQLSVFWFDFLAPYIKNHLVASNDKEVFALLPSKLSEEKYKSQLEGRSLIVKKHRLIPLEAIVRGYITGSAWKEYKNSKTVHGVKVENENLQESDAFPTPIFTPSTKAEQGEHDENISIEQAAEIVGKDICEKVAVKAVELYSAAKNFALLKGIIIADTKFEFGLDENNELVLVDEVLTPDSSRFWNQKTYQVGKSQESYDKQFLRDWLTANGLNGKEGVAMDAEIAIKSKEKYIEAYEAITGKKWA.

This sequence belongs to the SAICAR synthetase family.

It carries out the reaction 5-amino-1-(5-phospho-D-ribosyl)imidazole-4-carboxylate + L-aspartate + ATP = (2S)-2-[5-amino-1-(5-phospho-beta-D-ribosyl)imidazole-4-carboxamido]succinate + ADP + phosphate + 2 H(+). Its pathway is purine metabolism; IMP biosynthesis via de novo pathway; 5-amino-1-(5-phospho-D-ribosyl)imidazole-4-carboxamide from 5-amino-1-(5-phospho-D-ribosyl)imidazole-4-carboxylate: step 1/2. The polypeptide is Phosphoribosylaminoimidazole-succinocarboxamide synthase (ADE1) (Komagataella pastoris (Yeast)).